Reading from the N-terminus, the 2067-residue chain is Negative regulator of mitosis (2067 aa).

Polar residues predominate over residues Ser-100–Glu-118. 3 disordered regions span residues Ser-100 to Lys-132, Glu-332 to Ala-408, and Gly-452 to Pro-480. The Nuclear localization signal signature appears at Ser-336–Gly-347. The span at Ser-336–Ser-355 shows a compositional bias: basic residues. Polar residues predominate over residues Trp-384–Thr-396. PC repeat units follow at residues Ala-1434–Glu-1465, Ala-1482–Val-1520, Gly-1532–Phe-1562, and Gly-1625–Leu-1659. The interval Phe-2020 to His-2042 is disordered.

Belongs to the APC1 family.

Functionally, negative regulator of mitosis in E.nidulans. This protein is part of a regulatory pathway that includes the nimA protein kinase. It is required to prevent premature entry into mitosis. Mutations to this protein both cause cells to enter mitosis and prevent them from leaving mitosis. The protein is Negative regulator of mitosis (bimE) of Emericella nidulans (strain FGSC A4 / ATCC 38163 / CBS 112.46 / NRRL 194 / M139) (Aspergillus nidulans).